Consider the following 1197-residue polypeptide: DNA-directed RNA polymerase subunit beta (1197 aa).

Polar residues predominate over residues 581-597 (QANSPLNDDGSFTNPTV). 2 disordered regions span residues 581–603 (QANS…RHGD) and 1172–1197 (EKPD…EENV).

It belongs to the RNA polymerase beta chain family. As to quaternary structure, the RNAP catalytic core consists of 2 alpha, 1 beta, 1 beta' and 1 omega subunit. When a sigma factor is associated with the core the holoenzyme is formed, which can initiate transcription.

It carries out the reaction RNA(n) + a ribonucleoside 5'-triphosphate = RNA(n+1) + diphosphate. Functionally, DNA-dependent RNA polymerase catalyzes the transcription of DNA into RNA using the four ribonucleoside triphosphates as substrates. This Oenococcus oeni (strain ATCC BAA-331 / PSU-1) protein is DNA-directed RNA polymerase subunit beta.